The primary structure comprises 345 residues: RDS/peripherin-like protein xRDS36 (345 aa).

Residues 1 to 24 are Cytoplasmic-facing; that stretch reads MVLFKAKFSFQRRVKLAQTLWLLS. The chain crosses the membrane as a helical span at residues 25–43; sequence WLSVLVGCLTFGMGIFLKV. The Lumenal segment spans residues 44 to 61; that stretch reads QLWIHNEVMDNTTAHAVP. The N-linked (GlcNAc...) asparagine glycan is linked to asparagine 54. The helical transmembrane segment at 62 to 80 threads the bilayer; the sequence is NTVITAGLVGILLGYFAGK. Residues 81–99 lie on the Cytoplasmic side of the membrane; it reads ISQASMDLTKYQRWKSFMM. A helical membrane pass occupies residues 100–123; sequence PFFFLAILSCIVCLAALVLSVALR. Residues 124–264 are Lumenal-facing; that stretch reads GTLEESLKIG…LGYYTGIMAT (141 aa). Asparagine 229 is a glycosylation site (N-linked (GlcNAc...) asparagine). The chain crosses the membrane as a helical span at residues 265–290; sequence NGAAVTLSFLLQASVLVSLRYVQTSM. The Cytoplasmic segment spans residues 291–345; the sequence is DKIRDPDDVEADTEGFLLEKGVMETVNSSLEKIKDLFKSNQVETAEGGGEGAAGS.

It belongs to the PRPH2/ROM1 family. In terms of assembly, homodimer; disulfide-linked. As to expression, rod specific.

The protein resides in the membrane. The sequence is that of RDS/peripherin-like protein xRDS36 (rds36) from Xenopus laevis (African clawed frog).